The chain runs to 900 residues: Iodate reductase subunit IdrA (900 aa).

The disordered stretch occupies residues 1–21; that stretch reads MSENIKQGGAGTFMQAPQDSV. Residues Cys35, Cys38, and Cys42 each contribute to the [3Fe-4S] cluster site.

Belongs to the prokaryotic molybdopterin-containing oxidoreductase family. The iodate reductase (Idr) complex is composed of a molybdopterin-dependent iodate reductase (IdrA and IdrB subunits) and two associated peroxidases (IdrP1 and IdrP2). The cofactor is [3Fe-4S] cluster. Mo-bis(molybdopterin guanine dinucleotide) serves as cofactor.

The protein resides in the periplasm. Its function is as follows. Involved in iodate respiration. May accept electrons from cytochrome c551, and catalyze the reduction of iodate (IO(3)(-)) to produce the chemically unstable intermediate hypoiodous acid (HIO). This intermediate then undergoes abiotic disproportionation to yield two molecules of iodide (I(-)) and one molecule of iodate. The resultant iodate subsequently cycles back into the reductive pathway. The initial reduction of iodate may inadvertently produce low levels of incidental toxic H(2)O(2), which is detoxified by IdrP1 and IdrP2. This chain is Iodate reductase subunit IdrA, found in Denitromonas iodatirespirans.